A 65-amino-acid chain; its full sequence is Large ribosomal subunit protein bL31 (65 aa).

4 residues coordinate Zn(2+): Cys16, Cys18, Cys36, and Cys39.

Belongs to the bacterial ribosomal protein bL31 family. Type A subfamily. Part of the 50S ribosomal subunit. The cofactor is Zn(2+).

In terms of biological role, binds the 23S rRNA. This Geotalea uraniireducens (strain Rf4) (Geobacter uraniireducens) protein is Large ribosomal subunit protein bL31.